We begin with the raw amino-acid sequence, 912 residues long: Metabotropic glutamate receptor 4 (912 aa).

Positions 1–32 (MSGKGGWAWWWARLPLCLLLSLYGSWVPSSLG) are cleaved as a signal peptide. The Extracellular portion of the chain corresponds to 33 to 586 (KPKGHPHMNS…PIVKLEWDSP (554 aa)). Cysteines 67 and 109 form a disulfide. Asn98 carries N-linked (GlcNAc...) asparagine glycosylation. L-glutamate contacts are provided by residues Ser159, 180–182 (AST), and Tyr230. Intrachain disulfides connect Cys249–Cys538, Cys372–Cys388, Cys428–Cys435, Cys520–Cys539, Cys524–Cys542, Cys545–Cys557, and Cys560–Cys573. N-linked (GlcNAc...) asparagine glycosylation is present at Asn301. Asp312 lines the L-glutamate pocket. Lys405 contributes to the L-glutamate binding site. The helical transmembrane segment at 587 to 607 (WAVLPLFLAVVGIAATLFVVV) threads the bilayer. Residues 608–624 (TFVRYNDTPIVKASGRE) are Cytoplasmic-facing. A helical transmembrane segment spans residues 625–645 (LSYVLLAGIFLCYATTFLMIA). The Extracellular portion of the chain corresponds to 646–653 (EPDLGTCS). The helical transmembrane segment at 654 to 671 (LRRIFLGLGMSISYAALL) threads the bilayer. Residues 672–699 (TKTNRIYRIFEQGKRSVSAPRFISPASQ) are Cytoplasmic-facing. Residues 700–720 (LAITFVLISLQLLCICVWFVV) form a helical membrane-spanning segment. Over 721–751 (DPSHSVVDFQDQRTLDPRFARGVLKCDISDL) the chain is Extracellular. A helical membrane pass occupies residues 752–772 (SLICLLGYSMLLMVTCTVYAI). The Cytoplasmic segment spans residues 773 to 786 (KTRGVPETFNEAKP). Residues 787 to 807 (IGFTMYTTCIVWLAFIPIFFG) form a helical membrane-spanning segment. Over 808-826 (TSQSADKLYIQTTTLTVSV) the chain is Extracellular. The chain crosses the membrane as a helical span at residues 827–847 (SLSASVSLGMLYMPKVYIILF). Over 848-912 (HPEQNVPKRK…TYVTYTNHAI (65 aa)) the chain is Cytoplasmic.

Belongs to the G-protein coupled receptor 3 family. As to quaternary structure, interacts with PICK1.

It is found in the cell membrane. G-protein coupled receptor for glutamate. Ligand binding causes a conformation change that triggers signaling via guanine nucleotide-binding proteins (G proteins) and modulates the activity of down-stream effectors. Signaling inhibits adenylate cyclase activity. The polypeptide is Metabotropic glutamate receptor 4 (Grm4) (Mus musculus (Mouse)).